The sequence spans 258 residues: GTP cyclohydrolase FolE2 (258 aa).

This sequence belongs to the GTP cyclohydrolase IV family.

The catalysed reaction is GTP + H2O = 7,8-dihydroneopterin 3'-triphosphate + formate + H(+). It participates in cofactor biosynthesis; 7,8-dihydroneopterin triphosphate biosynthesis; 7,8-dihydroneopterin triphosphate from GTP: step 1/1. Functionally, converts GTP to 7,8-dihydroneopterin triphosphate. The protein is GTP cyclohydrolase FolE2 of Pseudothermotoga lettingae (strain ATCC BAA-301 / DSM 14385 / NBRC 107922 / TMO) (Thermotoga lettingae).